A 246-amino-acid chain; its full sequence is Ribonuclease PH (246 aa).

Residues 67-87 (NMLPGSTSPRKRRDRSGKVDG) are disordered. Phosphate-binding positions include Arg-88 and 126 to 128 (GTR).

The protein belongs to the RNase PH family. As to quaternary structure, homohexameric ring arranged as a trimer of dimers.

The enzyme catalyses tRNA(n+1) + phosphate = tRNA(n) + a ribonucleoside 5'-diphosphate. In terms of biological role, phosphorolytic 3'-5' exoribonuclease that plays an important role in tRNA 3'-end maturation. Removes nucleotide residues following the 3'-CCA terminus of tRNAs; can also add nucleotides to the ends of RNA molecules by using nucleoside diphosphates as substrates, but this may not be physiologically important. Probably plays a role in initiation of 16S rRNA degradation (leading to ribosome degradation) during starvation. This is Ribonuclease PH from Rhodopirellula baltica (strain DSM 10527 / NCIMB 13988 / SH1).